Here is a 153-residue protein sequence, read N- to C-terminus: 6,7-dimethyl-8-ribityllumazine synthase (153 aa).

Residues Phe22, 56-58 (AFE), and 80-82 (AVI) each bind 5-amino-6-(D-ribitylamino)uracil. 85–86 (ST) contributes to the (2S)-2-hydroxy-3-oxobutyl phosphate binding site. The Proton donor role is filled by His88. Residue Phe113 coordinates 5-amino-6-(D-ribitylamino)uracil. Arg127 serves as a coordination point for (2S)-2-hydroxy-3-oxobutyl phosphate.

The protein belongs to the DMRL synthase family.

The catalysed reaction is (2S)-2-hydroxy-3-oxobutyl phosphate + 5-amino-6-(D-ribitylamino)uracil = 6,7-dimethyl-8-(1-D-ribityl)lumazine + phosphate + 2 H2O + H(+). Its pathway is cofactor biosynthesis; riboflavin biosynthesis; riboflavin from 2-hydroxy-3-oxobutyl phosphate and 5-amino-6-(D-ribitylamino)uracil: step 1/2. Catalyzes the formation of 6,7-dimethyl-8-ribityllumazine by condensation of 5-amino-6-(D-ribitylamino)uracil with 3,4-dihydroxy-2-butanone 4-phosphate. This is the penultimate step in the biosynthesis of riboflavin. This is 6,7-dimethyl-8-ribityllumazine synthase from Clostridium botulinum (strain Alaska E43 / Type E3).